A 727-amino-acid chain; its full sequence is MNQKLLKLENLLRFHTIYRQLHSLCQRRALRQWRHGFSSAYPVWTAQLCAWPWPTDVLTGAALSQYRLLVTKKEEGPWKSQLSSTKSKKVVEVWIGMTIEELARAMEKNTDYVYEALLNTDIDIDSLEADSHLDEVWIKEVITKAGMKLKWSKLKQDKVRKNKDAVRRPQADPALLTPRSPVVTIMGHVDHGKTTLLDKFRKTQVAAVETGGITQHIGAFLVSLPSGEKITFLDTPGHAAFSAMRARGAQVTDIVVLVVAADDGVMKQTVESIQHAKDAQVPIILAVNKCDKAEADPEKVKKELLAYDVVCEDYGGDVQAVPVSALTGDNLMALAEATVALAEMLELKADPNGPVEGTVIESFTDKGRGLVTTAIIQRGTLRKGSVLVAGKCWAKVRLMFDENGKTIDEAYPSMPVGITGWRDLPSAGEEILEVESEPRAREVVDWRKYEQEQEKGQEDLKIIEEKRKEHKEAHQKAREKYGHLLWKKRSILRFLERKEQIPLKPKEKRERDSNVLSVIIKGDVDGSVEAILNIIDTYDASHECELELVHFGVGDVSANDVNLAETFDGVIYGFNVNAGNVIQQSAAKKGVKIKLHKIIYRLVEDLQEELSSRLPCAVEEHPVGEASILATFSVTEGKKKVPVAGCRVQKGQLEKQKKFKLTRNGHVIWKGSLTSLKHHKDDISIVKTGMDCGLSLDEDNMEFQVGDRIVCYEEKQIQAKTSWDPGF.

The N-terminal 29 residues, 1 to 29 (MNQKLLKLENLLRFHTIYRQLHSLCQRRA), are a transit peptide targeting the mitochondrion. Residues 178-348 (PRSPVVTIMG…VALAEMLELK (171 aa)) form the tr-type G domain. A G1 region spans residues 187 to 194 (GHVDHGKT). 187 to 194 (GHVDHGKT) provides a ligand contact to GTP. A G2 region spans residues 212–216 (GITQH). Residues 234–237 (DTPG) and 288–291 (NKCD) contribute to the GTP site. Residues 234–237 (DTPG) are G3. A G4 region spans residues 288-291 (NKCD). The G5 stretch occupies residues 324 to 326 (SAL). Position 688 is a phosphothreonine (threonine 688).

It belongs to the TRAFAC class translation factor GTPase superfamily. Classic translation factor GTPase family. IF-2 subfamily. Monomer. As to expression, expressed in all tissues examined. Highest level in skeletal muscle.

The protein localises to the mitochondrion. One of the essential components for the initiation of protein synthesis. Protects formylmethionyl-tRNA from spontaneous hydrolysis and promotes its binding to the 30S ribosomal subunits. Also involved in the hydrolysis of GTP during the formation of the 70S ribosomal complex. The protein is Translation initiation factor IF-2, mitochondrial (MTIF2) of Homo sapiens (Human).